We begin with the raw amino-acid sequence, 303 residues long: Glycine--tRNA ligase alpha subunit (303 aa).

Belongs to the class-II aminoacyl-tRNA synthetase family. Tetramer of two alpha and two beta subunits.

It localises to the cytoplasm. It catalyses the reaction tRNA(Gly) + glycine + ATP = glycyl-tRNA(Gly) + AMP + diphosphate. In Salmonella paratyphi A (strain ATCC 9150 / SARB42), this protein is Glycine--tRNA ligase alpha subunit.